The chain runs to 195 residues: ATP-dependent Clp protease proteolytic subunit (195 aa).

Catalysis depends on Ser-94, which acts as the Nucleophile. Residue His-119 is part of the active site.

The protein belongs to the peptidase S14 family. As to quaternary structure, component of the chloroplastic Clp protease core complex.

It localises to the plastid. Its subcellular location is the chloroplast stroma. It carries out the reaction Hydrolysis of proteins to small peptides in the presence of ATP and magnesium. alpha-casein is the usual test substrate. In the absence of ATP, only oligopeptides shorter than five residues are hydrolyzed (such as succinyl-Leu-Tyr-|-NHMec, and Leu-Tyr-Leu-|-Tyr-Trp, in which cleavage of the -Tyr-|-Leu- and -Tyr-|-Trp bonds also occurs).. Its function is as follows. Cleaves peptides in various proteins in a process that requires ATP hydrolysis. Has a chymotrypsin-like activity. Plays a major role in the degradation of misfolded proteins. This chain is ATP-dependent Clp protease proteolytic subunit, found in Cycas taitungensis (Prince sago).